A 67-amino-acid polypeptide reads, in one-letter code: Beta-defensin 103A (67 aa).

The N-terminal stretch at 1–22 is a signal peptide; that stretch reads MRIHYLLFALLFLFLVPVPGHG. 3 cysteine pairs are disulfide-bonded: cysteine 33/cysteine 62, cysteine 40/cysteine 55, and cysteine 45/cysteine 63.

Belongs to the beta-defensin family.

The protein resides in the secreted. Exhibits antimicrobial activity against Gram-positive and Gram-negative bacteria. In Pan troglodytes (Chimpanzee), this protein is Beta-defensin 103A (DEFB103A).